The chain runs to 529 residues: Retinoic acid-induced protein 2 (529 aa).

2 disordered regions span residues 1 to 21 (MDDL…PTLA) and 400 to 419 (SHSS…HPGS). Residues 407–416 (GTEMVSQPSH) are compositionally biased toward polar residues.

This chain is Retinoic acid-induced protein 2 (Rai2), found in Mus musculus (Mouse).